A 197-amino-acid chain; its full sequence is ATP-dependent Clp protease proteolytic subunit (197 aa).

S101 acts as the Nucleophile in catalysis. The active site involves H126.

This sequence belongs to the peptidase S14 family. Component of the chloroplastic Clp protease core complex.

The protein localises to the plastid. It is found in the chloroplast stroma. It catalyses the reaction Hydrolysis of proteins to small peptides in the presence of ATP and magnesium. alpha-casein is the usual test substrate. In the absence of ATP, only oligopeptides shorter than five residues are hydrolyzed (such as succinyl-Leu-Tyr-|-NHMec, and Leu-Tyr-Leu-|-Tyr-Trp, in which cleavage of the -Tyr-|-Leu- and -Tyr-|-Trp bonds also occurs).. In terms of biological role, cleaves peptides in various proteins in a process that requires ATP hydrolysis. Has a chymotrypsin-like activity. Plays a major role in the degradation of misfolded proteins. The protein is ATP-dependent Clp protease proteolytic subunit of Daucus carota (Wild carrot).